A 437-amino-acid chain; its full sequence is ATP-dependent RNA helicase RhlB (437 aa).

Positions 9–37 match the Q motif motif; the sequence is QKFADLGLEPTVLEGLDAQGFHYCTPIQA. The Helicase ATP-binding domain occupies 40–219; the sequence is LPVVLTGQDI…FEHMNSPESV (180 aa). 53–60 contacts ATP; it reads AQTGTGKT. Residues 165 to 168 carry the DEAD box motif; that stretch reads DEAD. The region spanning 245–390 is the Helicase C-terminal domain; it reads RLLQTLIEEE…LSKYNSEALL (146 aa). The segment at 395–437 is disordered; that stretch reads APLRLQRTPRQGGNRRPNGNRQGQGQSRPRNNNRRHPQSQKQQ. Residues 400-424 show a composition bias toward low complexity; it reads QRTPRQGGNRRPNGNRQGQGQSRPR. A compositionally biased stretch (basic residues) spans 425 to 437; the sequence is NNNRRHPQSQKQQ.

Belongs to the DEAD box helicase family. RhlB subfamily. As to quaternary structure, component of the RNA degradosome, which is a multiprotein complex involved in RNA processing and mRNA degradation.

It localises to the cytoplasm. The catalysed reaction is ATP + H2O = ADP + phosphate + H(+). In terms of biological role, DEAD-box RNA helicase involved in RNA degradation. Has RNA-dependent ATPase activity and unwinds double-stranded RNA. The chain is ATP-dependent RNA helicase RhlB from Photobacterium profundum (strain SS9).